An 839-amino-acid polypeptide reads, in one-letter code: Taste receptor type 1 member 2 (839 aa).

The signal sequence occupies residues 1 to 19; sequence MGPRAKTISSLFFLLWVLA. The Extracellular portion of the chain corresponds to 20–566; sequence EPAENSDFYL…VFLEWHEAPT (547 aa). Asparagine 84, asparagine 248, asparagine 292, asparagine 312, asparagine 368, asparagine 428, asparagine 487, and asparagine 527 each carry an N-linked (GlcNAc...) asparagine glycan. A helical transmembrane segment spans residues 567–587; that stretch reads IAVALLAALGFLSTLAILVIF. At 588 to 602 the chain is on the cytoplasmic side; the sequence is WRHFQTPIVRSAGGP. The chain crosses the membrane as a helical span at residues 603–623; that stretch reads MCFLMLTLLLVAYMVVPVYVG. Residues 624-635 are Extracellular-facing; the sequence is PPKVSTCLCRQA. Residues 636–656 traverse the membrane as a helical segment; the sequence is LFPLCFTICISCIAVRSFQIV. Over 657–681 the chain is Cytoplasmic; that stretch reads CAFKMASRFPRAYSYWVRYQGPYVS. The chain crosses the membrane as a helical span at residues 682-702; it reads MAFITVLKMVIVVIGMLATGL. At 703-727 the chain is on the extracellular side; sequence SPTTRTDPDDPKITIVSCNPNYRNS. Residues 728 to 748 form a helical membrane-spanning segment; that stretch reads LLFNTSLDLLLSVVGFSFAYM. The Cytoplasmic portion of the chain corresponds to 749-760; sequence GKELPTNYNEAK. Residues 761 to 781 form a helical membrane-spanning segment; the sequence is FITLSMTFYFTSSVSLCTFMS. Over 782–784 the chain is Extracellular; the sequence is AYS. The helical transmembrane segment at 785–805 threads the bilayer; that stretch reads GVLVTIVDLLVTVLNLLAISL. Over 806-839 the chain is Cytoplasmic; that stretch reads GYFGPKCYMILFYPERNTPAYFNSMIQGYTMRRD.

It belongs to the G-protein coupled receptor 3 family. TAS1R subfamily. In terms of assembly, forms heterodimers with TAS1R3.

The protein resides in the cell membrane. Its function is as follows. Putative taste receptor. TAS1R2/TAS1R3 recognizes diverse natural and synthetic sweeteners. This Homo sapiens (Human) protein is Taste receptor type 1 member 2 (TAS1R2).